The sequence spans 386 residues: Patatin-04/09 (386 aa).

Residues 1–23 (MATTKSFLILFFMILATTSSTCA) form the signal peptide. One can recognise a PNPLA domain in the interval 32-229 (LSIDGGGIKG…TVGDPALLSL (198 aa)). A GXGXXG motif is present at residues 36 to 41 (GGGIKG). The GXSXG motif lies at 75-79 (GTSTG). The active-site Nucleophile is Ser77. N-linked (GlcNAc...) asparagine glycosylation occurs at Asn115. The active-site Proton acceptor is the Asp215. A DGA/G motif is present at residues 215–217 (DGG). Positions 321 to 384 (ENALNGTTTE…DRKKLRANKA (64 aa)) form a coiled coil. Asn325 carries N-linked (GlcNAc...) asparagine glycosylation.

The protein belongs to the patatin family. As to expression, tuber.

The protein resides in the vacuole. In terms of biological role, probable lipolytic acyl hydrolase (LAH), an activity which is thought to be involved in the response of tubers to pathogens. In Solanum tuberosum (Potato), this protein is Patatin-04/09.